The chain runs to 549 residues: Cell pattern formation-associated protein StuA (549 aa).

Residues 86 to 192 (RVTATLWEDE…HNIGALLYHP (107 aa)) form the HTH APSES-type domain. Positions 120–141 (GTKLLNVAGMTRGRRDGILKSE) form a DNA-binding region, H-T-H motif. 4 disordered regions span residues 205-227 (AERRKHEGLGGQRPPAPNALPSI), 246-288 (SLAN…DLHR), 332-466 (REED…DHLN), and 514-549 (ASTVAASPSYPSAPVYDTAARPPSAISAPRRQQSFG). A compositionally biased stretch (polar residues) spans 246-266 (SLANGPQSLASTPQPLANGSQ). Basic and acidic residues-rich tracts occupy residues 278 to 288 (RGREEEEDLHR), 332 to 346 (REEDDEVHRSAHNAH), and 385 to 395 (RGRDEDDDHRS). Residues 516–545 (TVAASPSYPSAPVYDTAARPPSAISAPRRQ) are nuclear localization domain. A compositionally biased stretch (low complexity) spans 532-549 (AARPPSAISAPRRQQSFG).

Belongs to the EFG1/PHD1/stuA family.

Its subcellular location is the nucleus. Transcription factor that regulates asexual reproduction. Binds the StuA-response elements (StRE) with the consensus sequence 5'-(A/T)CGCG(T/A)N(A/C)-3' at the promoters of target genes. The chain is Cell pattern formation-associated protein StuA from Gibberella moniliformis (strain M3125 / FGSC 7600) (Maize ear and stalk rot fungus).